We begin with the raw amino-acid sequence, 226 residues long: N-(5'-phosphoribosyl)anthranilate isomerase (226 aa).

This sequence belongs to the TrpF family.

It carries out the reaction N-(5-phospho-beta-D-ribosyl)anthranilate = 1-(2-carboxyphenylamino)-1-deoxy-D-ribulose 5-phosphate. Its pathway is amino-acid biosynthesis; L-tryptophan biosynthesis; L-tryptophan from chorismate: step 3/5. The sequence is that of N-(5'-phosphoribosyl)anthranilate isomerase from Synechococcus sp. (strain JA-3-3Ab) (Cyanobacteria bacterium Yellowstone A-Prime).